Consider the following 273-residue polypeptide: Putative phosphoenolpyruvate synthase regulatory protein (273 aa).

153 to 160 lines the ADP pocket; sequence GVSRSGKT.

The protein belongs to the pyruvate, phosphate/water dikinase regulatory protein family. PSRP subfamily.

The enzyme catalyses [pyruvate, water dikinase] + ADP = [pyruvate, water dikinase]-phosphate + AMP + H(+). It catalyses the reaction [pyruvate, water dikinase]-phosphate + phosphate + H(+) = [pyruvate, water dikinase] + diphosphate. Functionally, bifunctional serine/threonine kinase and phosphorylase involved in the regulation of the phosphoenolpyruvate synthase (PEPS) by catalyzing its phosphorylation/dephosphorylation. This is Putative phosphoenolpyruvate synthase regulatory protein from Polaromonas sp. (strain JS666 / ATCC BAA-500).